Here is a 678-residue protein sequence, read N- to C-terminus: Endoplasmic reticulum membrane-associated RNA degradation protein (678 aa).

2 helical membrane passes run 390–410 (LLAF…LSVF) and 587–607 (VLSL…AVCG).

The protein resides in the endoplasmic reticulum membrane. Its function is as follows. May play a role in neuronal migration during embryonic development. The polypeptide is Endoplasmic reticulum membrane-associated RNA degradation protein (ERMARD) (Homo sapiens (Human)).